The primary structure comprises 133 residues: MVFVNPLANALTSIYNNEMRRNKQAIIMPASKLVINVLRVMQKEGYVGEFEYIDDGRWGKITVQLLGRVNKCGPITPRYPLSYRQMIALPDYVRRYLPSKEIGIIIVSTSKGVMSHKEAARLRIGGVALGYVY.

The protein belongs to the universal ribosomal protein uS8 family. In terms of assembly, part of the 30S ribosomal subunit.

One of the primary rRNA binding proteins, it binds directly to 16S rRNA central domain where it helps coordinate assembly of the platform of the 30S subunit. This chain is Small ribosomal subunit protein uS8, found in Saccharolobus solfataricus (strain ATCC 35092 / DSM 1617 / JCM 11322 / P2) (Sulfolobus solfataricus).